Consider the following 635-residue polypeptide: Threonine--tRNA ligase (635 aa).

The TGS domain occupies 1–61; the sequence is MINISFPDGS…DNDCKLRILT (61 aa). A catalytic region spans residues 242 to 533; sequence DHRKLGRELD…LIEEYAGRFP (292 aa). Residues Cys333, His384, and His510 each contribute to the Zn(2+) site.

The protein belongs to the class-II aminoacyl-tRNA synthetase family. Homodimer. It depends on Zn(2+) as a cofactor.

It localises to the cytoplasm. It catalyses the reaction tRNA(Thr) + L-threonine + ATP = L-threonyl-tRNA(Thr) + AMP + diphosphate + H(+). Its function is as follows. Catalyzes the attachment of threonine to tRNA(Thr) in a two-step reaction: L-threonine is first activated by ATP to form Thr-AMP and then transferred to the acceptor end of tRNA(Thr). Also edits incorrectly charged L-seryl-tRNA(Thr). The protein is Threonine--tRNA ligase of Rickettsia africae (strain ESF-5).